The primary structure comprises 417 residues: NADH-quinone oxidoreductase subunit D (417 aa).

Belongs to the complex I 49 kDa subunit family. In terms of assembly, NDH-1 is composed of 14 different subunits. Subunits NuoB, C, D, E, F, and G constitute the peripheral sector of the complex.

The protein resides in the cell inner membrane. It carries out the reaction a quinone + NADH + 5 H(+)(in) = a quinol + NAD(+) + 4 H(+)(out). Functionally, NDH-1 shuttles electrons from NADH, via FMN and iron-sulfur (Fe-S) centers, to quinones in the respiratory chain. The immediate electron acceptor for the enzyme in this species is believed to be ubiquinone. Couples the redox reaction to proton translocation (for every two electrons transferred, four hydrogen ions are translocated across the cytoplasmic membrane), and thus conserves the redox energy in a proton gradient. The protein is NADH-quinone oxidoreductase subunit D of Herminiimonas arsenicoxydans.